The sequence spans 460 residues: Retinoic acid receptor alpha (460 aa).

The modulating stretch occupies residues M1–P87. A disordered region spans residues H46–P78. Polar residues predominate over residues G52–E69. NR C4-type zinc fingers lie at residues C88–C108 and C124–C148. A DNA-binding region (nuclear receptor) is located at residues C88–M153. Positions S154–P182 are hinge. Residues E183 to S417 form the NR LBD domain. Residues P408–N416 carry the 9aaTAD motif. The disordered stretch occupies residues E418 to P460. Positions G425–L435 are enriched in gly residues. Over residues C442–P460 the composition is skewed to low complexity.

Belongs to the nuclear hormone receptor family. NR1 subfamily. Heterodimer; with an RXR molecule. Binds DNA preferentially as a RAR/RXR heterodimer. As to expression, ubiquitous.

Its subcellular location is the nucleus. Receptor for retinoic acid. Retinoic acid receptors bind as heterodimers to their target response elements in response to their ligands, all-trans or 9-cis retinoic acid, and regulate gene expression in various biological processes. The RAR/RXR heterodimers bind to the retinoic acid response elements (RARE) composed of tandem 5'-AGGTCA-3' sites known as DR1-DR5. Required for hindbrain patterning and appears to be required for skin development. This chain is Retinoic acid receptor alpha (RARA), found in Gallus gallus (Chicken).